We begin with the raw amino-acid sequence, 253 residues long: Kallikrein-7 (253 aa).

Positions 1-22 (MARSLLLPLQILLLSLALETAG) are cleaved as a signal peptide. The propeptide at 23-29 (EEAQGDK) is activation peptide. In terms of domain architecture, Peptidase S1 spans 30-250 (IIDGAPCARG…FTKWINDTMK (221 aa)). Cystine bridges form between Cys36-Cys165, Cys55-Cys71, Cys137-Cys239, Cys144-Cys211, Cys176-Cys190, and Cys201-Cys226. Residues His70 and Asp112 each act as charge relay system in the active site. The active-site Charge relay system is Ser205. Asn246 carries N-linked (GlcNAc...) asparagine glycosylation.

It belongs to the peptidase S1 family. Kallikrein subfamily. In terms of tissue distribution, abundantly expressed in the skin and is expressed by keratinocytes in the epidermis. Also expressed in the brain, mammary gland, cerebellum, spinal cord and kidney. Lower levels in salivary glands, uterus, thymus, thyroid, placenta, trachea and testis. Up-regulated in ovarian carcinoma, especially late-stage serous carcinoma, compared with normal ovaries and benign adenomas (at protein level).

It is found in the secreted. The catalysed reaction is Cleavage of proteins with aromatic side chains in the P1 position.. Its activity is regulated as follows. Inhibited by Zn2+ and Cu2+ at low micromolar concentrations. Inhibited by SERPINA12. In terms of biological role, may catalyze the degradation of intercellular cohesive structures in the cornified layer of the skin in the continuous shedding of cells from the skin surface. Specific for amino acid residues with aromatic side chains in the P1 position. Cleaves insulin A chain at '14-Tyr-|-Gln-15' and insulin B chain at '6-Leu-|-Cys-7', '16-Tyr-|-Leu-17', '25-Phe-|-Tyr-26' and '26-Tyr-|-Thr-27'. Could play a role in the activation of precursors to inflammatory cytokines. This is Kallikrein-7 (KLK7) from Homo sapiens (Human).